The following is a 448-amino-acid chain: Phosphoglucosamine mutase (448 aa).

S100 (phosphoserine intermediate) is an active-site residue. S100, D240, D242, and D244 together coordinate Mg(2+). S100 is modified (phosphoserine).

It belongs to the phosphohexose mutase family. The cofactor is Mg(2+). Activated by phosphorylation.

The catalysed reaction is alpha-D-glucosamine 1-phosphate = D-glucosamine 6-phosphate. Catalyzes the conversion of glucosamine-6-phosphate to glucosamine-1-phosphate. The chain is Phosphoglucosamine mutase from Bacillus velezensis (strain DSM 23117 / BGSC 10A6 / LMG 26770 / FZB42) (Bacillus amyloliquefaciens subsp. plantarum).